A 461-amino-acid polypeptide reads, in one-letter code: Cysteine--tRNA ligase (461 aa).

Zn(2+) is bound at residue Cys28. A 'HIGH' region motif is present at residues 30-40; that stretch reads ITVYDLCHIGH. Residues Cys209, His234, and Glu238 each coordinate Zn(2+). A 'KMSKS' region motif is present at residues 266–270; it reads KMSKS. Residue Lys269 participates in ATP binding.

Belongs to the class-I aminoacyl-tRNA synthetase family. In terms of assembly, monomer. Zn(2+) serves as cofactor.

The protein localises to the cytoplasm. The catalysed reaction is tRNA(Cys) + L-cysteine + ATP = L-cysteinyl-tRNA(Cys) + AMP + diphosphate. The protein is Cysteine--tRNA ligase of Escherichia coli (strain 55989 / EAEC).